A 611-amino-acid chain; its full sequence is Chaperone protein HtpG (611 aa).

The interval 1-326 (MSETLERHAF…TEDLPLNVSR (326 aa)) is a; substrate-binding. The b stretch occupies residues 327–536 (EMLQATPVLA…SGGPDLQMQR (210 aa)). Positions 537-611 (LLRRAGRGFG…RVAAALAAQA (75 aa)) are c.

It belongs to the heat shock protein 90 family. Homodimer.

It localises to the cytoplasm. Its function is as follows. Molecular chaperone. Has ATPase activity. The sequence is that of Chaperone protein HtpG from Methylobacterium sp. (strain 4-46).